A 377-amino-acid chain; its full sequence is S-adenosylmethionine decarboxylase proenzyme 2 (377 aa).

Active-site residues include Glu-24 and Glu-27. The active-site Schiff-base intermediate with substrate; via pyruvic acid is the Ser-84. Residue Ser-84 is modified to Pyruvic acid (Ser); by autocatalysis. The Proton donor; for catalytic activity role is filled by Cys-98. Active-site proton acceptor; for processing activity residues include Ser-246 and His-259.

It belongs to the eukaryotic AdoMetDC family. Pyruvate serves as cofactor. In terms of processing, is synthesized initially as an inactive proenzyme. Formation of the active enzyme involves a self-maturation process in which the active site pyruvoyl group is generated from an internal serine residue via an autocatalytic post-translational modification. Two non-identical subunits are generated from the proenzyme in this reaction, and the pyruvate is formed at the N-terminus of the alpha chain, which is derived from the carboxyl end of the proenzyme. The post-translation cleavage follows an unusual pathway, termed non-hydrolytic serinolysis, in which the side chain hydroxyl group of the serine supplies its oxygen atom to form the C-terminus of the beta chain, while the remainder of the serine residue undergoes an oxidative deamination to produce ammonia and the pyruvoyl group blocking the N-terminus of the alpha chain.

The enzyme catalyses S-adenosyl-L-methionine + H(+) = S-adenosyl 3-(methylsulfanyl)propylamine + CO2. The protein operates within amine and polyamine biosynthesis; S-adenosylmethioninamine biosynthesis; S-adenosylmethioninamine from S-adenosyl-L-methionine: step 1/1. This chain is S-adenosylmethionine decarboxylase proenzyme 2 (SAMDC2), found in Dianthus caryophyllus (Carnation).